Consider the following 288-residue polypeptide: Bifunctional protein FolD (288 aa).

NADP(+) contacts are provided by residues 166-168 (GAS) and I232.

It belongs to the tetrahydrofolate dehydrogenase/cyclohydrolase family. As to quaternary structure, homodimer.

The enzyme catalyses (6R)-5,10-methylene-5,6,7,8-tetrahydrofolate + NADP(+) = (6R)-5,10-methenyltetrahydrofolate + NADPH. It catalyses the reaction (6R)-5,10-methenyltetrahydrofolate + H2O = (6R)-10-formyltetrahydrofolate + H(+). Its pathway is one-carbon metabolism; tetrahydrofolate interconversion. Catalyzes the oxidation of 5,10-methylenetetrahydrofolate to 5,10-methenyltetrahydrofolate and then the hydrolysis of 5,10-methenyltetrahydrofolate to 10-formyltetrahydrofolate. This Salmonella heidelberg (strain SL476) protein is Bifunctional protein FolD.